The sequence spans 1366 residues: MNYSFTERKRVRKSFAKRVNNHQVPYLIATQLESYAKFLQADKPAMSRLTEGLQAAFTSAFPIVSNNGYARMEYVSYQLSQPPFDVKECQQRGYTYHSALRAKVRLIIYDREAPTKVKEVKESEVYMGEIPLMTENGSFVINGTERVIVSQLHRSPGVFFEHDKGKTHSSGKLLFSARIIPYRGSWLDFEFDPKDILYFRIDRRRKMPVTILLKAIGLNNEQILANFFNFDHFSLTANGGSMEFVPERLRGQLASFDVLDENGVVVIQKDKRINTKHIRELEAAKTKTIAVPDDYLIGRVVARNIVDPDSGEILAYANDEITEELLATLRDAGIKQLETIYTNDLDSGAYISQTLRTDETADQMAARIAIYRMLRPGEPPIEDAVEVLFQRLFYSEDTYDLSRVGRMKVNSRLNRPEMEGPMVLSSEDILDTIKSLVDLRNGKGEVDDIDHLGNRRVRCVGELAENQFRAGLSRVERAVKERLGQAETENLMPHDLTNSKPISSAIREFFGSSQLSQFMDQTNPLSEITHKRRISALGPGGLMRERAGFEVRDVHPTHYGRVCPIETPEGPNIGLINSLALFARLNEHGFLETPYRKVSNSKVSDEVVYLSAIEEAKYVIAQANATIDKSGKLADELVSARQAGETMMVSPERIDFIDVAPSQIVSAAASLVPFLEHDDANRALMGANMQRQAVPCLRPDKPLVGTGLERIVAVDSGTVVLAARGGIVDYVDANRVVIRVNDDETTAGEVGVDIYNLIKYTRSNQNTNINQRPIVKVGDRVARGDVVADGASTDLGELALGQNMTVAFMPWNGYNFEDSILISEKVVADDRYTSIHIEELSVVARDTKLGSEEITRDISNLAESQLSRLDESGIVYIGAEVEAGDVLVGKVTPKGETTLTPEEKLLRAIFGEKASDVKDTSLRVPSGMIGTIIDVQVFTREGIERDARAQSIIQEELQRYRLGLNDQLRIVEGDAFMRLEKLLIGKVANGGPKKLAKGTKIDKEYLADLDKYHRFDVRPADDEVASQVEAIKSSIEAKRKQFDEAFEEKRTKLTQGDDLQPGVTKMVKVYLAVKRRLQPGDKMAGRHGNKGVVSKIAPAEDMPFMADGRPVDIVLNPLGVPSRMNVGQILETHLGWAAQGIGKRVDEMVRQQAKQAELREFLKQLYNETGRIEDIDNFTDEQITVLAENLRQGLPFATPVFDGATEAEIGRMLELAYPEEVATSLKMTPSRQQMILCDGRTGDQFERPATVGVMHVLKLHHLVDDKMHARSTGPYSLVTQQPLGGKAQFGGQRFGEMEVWALEAYGASYVLQEMLTVKSDDVAGRTKVYENIVKGEHTIDAGMPESFNVLVKEIRSLGIEIDMERN.

The protein belongs to the RNA polymerase beta chain family. As to quaternary structure, the RNAP catalytic core consists of 2 alpha, 1 beta, 1 beta' and 1 omega subunit. When a sigma factor is associated with the core the holoenzyme is formed, which can initiate transcription.

It carries out the reaction RNA(n) + a ribonucleoside 5'-triphosphate = RNA(n+1) + diphosphate. DNA-dependent RNA polymerase catalyzes the transcription of DNA into RNA using the four ribonucleoside triphosphates as substrates. The protein is DNA-directed RNA polymerase subunit beta of Polynucleobacter necessarius subsp. necessarius (strain STIR1).